A 286-amino-acid polypeptide reads, in one-letter code: N-alpha-acetyltransferase 80 (286 aa).

The interval 33-54 is disordered; that stretch reads TFNPGPTELTLDPEHQPEETPA. The N-acetyltransferase domain occupies 60–207; the sequence is LTLEPVHRRP…VFTSRRLPAT (148 aa). Residues R85 and 90-93 contribute to the substrate site; that span reads RLHS. Residues 141–143, 149–154, and Q179 contribute to the acetyl-CoA site; these read VVV and GRGFGR. Residues 212-269 are disordered; that stretch reads FPTAPSPRPPRKAPNLTAQAAPRGPKGPPLPPPPPLPECLTISPPVPSGPPSKSLLET. Positions 236-248 are enriched in pro residues; that stretch reads PKGPPLPPPPPLP.

Belongs to the acetyltransferase family. Strongly expressed in heart and skeletal muscle, followed by brain and pancreas, with weak expression in kidney, liver, and lung and no expression in placenta.

The protein localises to the cytoplasm. It localises to the cytosol. The enzyme catalyses N-terminal L-aspartyl-L-aspartyl-L-aspartyl-[protein] + acetyl-CoA = N-terminal N-acetyl-L-aspartyl-L-aspartyl-L-aspartyl-[protein] + CoA + H(+). It catalyses the reaction N-terminal L-glutamyl-L-glutamyl-L-glutamyl-[protein] + acetyl-CoA = N-terminal N-acetyl-L-glutamyl-L-glutamyl-L-glutamyl-[protein] + CoA + H(+). In terms of biological role, N-alpha-acetyltransferase that specifically mediates the acetylation of the acidic amino terminus of processed forms of beta- and gamma-actin (ACTB and ACTG, respectively). N-terminal acetylation of processed beta- and gamma-actin regulates actin filament depolymerization and elongation. In vivo, preferentially displays N-terminal acetyltransferase activity towards acid N-terminal sequences starting with Asp-Asp-Asp and Glu-Glu-Glu. In vitro, shows high activity towards Met-Asp-Glu-Leu and Met-Asp-Asp-Asp. May act as a tumor suppressor. This chain is N-alpha-acetyltransferase 80, found in Homo sapiens (Human).